The sequence spans 307 residues: Ribosomal RNA small subunit methyltransferase H (307 aa).

Residues 33–35, D52, L83, D97, and Q104 contribute to the S-adenosyl-L-methionine site; that span reads AGH.

This sequence belongs to the methyltransferase superfamily. RsmH family.

The protein resides in the cytoplasm. The catalysed reaction is cytidine(1402) in 16S rRNA + S-adenosyl-L-methionine = N(4)-methylcytidine(1402) in 16S rRNA + S-adenosyl-L-homocysteine + H(+). Functionally, specifically methylates the N4 position of cytidine in position 1402 (C1402) of 16S rRNA. The sequence is that of Ribosomal RNA small subunit methyltransferase H from Sulfurovum sp. (strain NBC37-1).